The chain runs to 271 residues: Small ribosomal subunit protein uS2 (271 aa).

Positions 223 to 271 are disordered; sequence RALAGSEEGEATEEVTPASEAEKQEVLAEAMSEEGDALQESEVVEEEEK. The segment covering 253–271 has biased composition (acidic residues); the sequence is MSEEGDALQESEVVEEEEK.

It belongs to the universal ribosomal protein uS2 family.

The chain is Small ribosomal subunit protein uS2 from Wolinella succinogenes (strain ATCC 29543 / DSM 1740 / CCUG 13145 / JCM 31913 / LMG 7466 / NCTC 11488 / FDC 602W) (Vibrio succinogenes).